Consider the following 829-residue polypeptide: Leucine--tRNA ligase (829 aa).

The short motif at Pro-34–His-44 is the 'HIGH' region element. Residues Lys-591–Ser-595 carry the 'KMSKS' region motif. Residue Lys-594 coordinates ATP.

This sequence belongs to the class-I aminoacyl-tRNA synthetase family.

Its subcellular location is the cytoplasm. It carries out the reaction tRNA(Leu) + L-leucine + ATP = L-leucyl-tRNA(Leu) + AMP + diphosphate. The sequence is that of Leucine--tRNA ligase from Ehrlichia canis (strain Jake).